The sequence spans 249 residues: UPF0246 protein EUBREC_1226 (249 aa).

The protein belongs to the UPF0246 family.

This Agathobacter rectalis (strain ATCC 33656 / DSM 3377 / JCM 17463 / KCTC 5835 / VPI 0990) (Eubacterium rectale) protein is UPF0246 protein EUBREC_1226.